The sequence spans 655 residues: Acetyl-coenzyme A synthetase (655 aa).

CoA is bound by residues 193–196 (RGNK) and threonine 313. Residues 389 to 391 (GEP), 413 to 418 (DTWWQT), aspartate 502, and arginine 517 each bind ATP. Serine 525 lines the CoA pocket. Residue arginine 528 coordinates ATP. Mg(2+) contacts are provided by valine 539 and histidine 541. Residue arginine 586 participates in CoA binding. Lysine 611 bears the N6-acetyllysine mark.

The protein belongs to the ATP-dependent AMP-binding enzyme family. Mg(2+) is required as a cofactor. Acetylated. Deacetylation by the SIR2-homolog deacetylase activates the enzyme.

The catalysed reaction is acetate + ATP + CoA = acetyl-CoA + AMP + diphosphate. Catalyzes the conversion of acetate into acetyl-CoA (AcCoA), an essential intermediate at the junction of anabolic and catabolic pathways. AcsA undergoes a two-step reaction. In the first half reaction, AcsA combines acetate with ATP to form acetyl-adenylate (AcAMP) intermediate. In the second half reaction, it can then transfer the acetyl group from AcAMP to the sulfhydryl group of CoA, forming the product AcCoA. This is Acetyl-coenzyme A synthetase from Psychrobacter cryohalolentis (strain ATCC BAA-1226 / DSM 17306 / VKM B-2378 / K5).